Reading from the N-terminus, the 218-residue chain is Large ribosomal subunit protein uL2c (218 aa).

The tract at residues 165-192 is disordered; the sequence is GVVKNPVDHPHGGGEGRSPIGRSHPVTP.

This sequence belongs to the universal ribosomal protein uL2 family. Part of the 50S ribosomal subunit.

It is found in the plastid. The protein resides in the chloroplast. This Bigelowiella natans (Pedinomonas minutissima) protein is Large ribosomal subunit protein uL2c (rpl2).